We begin with the raw amino-acid sequence, 225 residues long: Golgi to ER traffic protein 1 (225 aa).

A topological domain (lumenal) is located at residue methionine 1. A helical membrane pass occupies residues 2 to 21 (NWVIIAALFFVIINKLLQYT). Over 22–107 (SRYQEAWINK…SQSKLFNRLK (86 aa)) the chain is Cytoplasmic. A coiled-coil region spans residues 37–104 (DISSLSKEYS…AKDSQSKLFN (68 aa)). A helical membrane pass occupies residues 108 to 128 (LLTLTLPFMILKLWKGKFIVY). Over 129–172 (DIPTKDTFPVIVNGVLSQGLLYIPLLPINFLRGIDPNKHILVPG) the chain is Lumenal. Residues 173-189 (VSLGIWLMALTKTIDTV) traverse the membrane as a helical segment. The Cytoplasmic segment spans residues 190–225 (EFIVKQLVFQPVVSKQVKEKTKEKVVELKTTEAELD).

This sequence belongs to the WRB/GET1 family. As to quaternary structure, component of the Golgi to ER traffic (GET) complex, which is composed of GET1, GET2 and GET3. Within the complex, GET1 and GET2 form a heterotetramer which is stabilized by phosphatidylinositol binding and which binds to the GET3 homodimer.

The protein localises to the endoplasmic reticulum membrane. The protein resides in the golgi apparatus membrane. Required for the post-translational delivery of tail-anchored (TA) proteins to the endoplasmic reticulum. Together with GET2, acts as a membrane receptor for soluble GET3, which recognizes and selectively binds the transmembrane domain of TA proteins in the cytosol. The GET complex cooperates with the HDEL receptor ERD2 to mediate the ATP-dependent retrieval of resident ER proteins that contain a C-terminal H-D-E-L retention signal from the Golgi to the ER. The protein is Golgi to ER traffic protein 1 of Vanderwaltozyma polyspora (strain ATCC 22028 / DSM 70294 / BCRC 21397 / CBS 2163 / NBRC 10782 / NRRL Y-8283 / UCD 57-17) (Kluyveromyces polysporus).